An 874-amino-acid polypeptide reads, in one-letter code: Alanine--tRNA ligase (874 aa).

Zn(2+)-binding residues include His563, His567, Cys665, and His669.

The protein belongs to the class-II aminoacyl-tRNA synthetase family. Zn(2+) is required as a cofactor.

It localises to the cytoplasm. It catalyses the reaction tRNA(Ala) + L-alanine + ATP = L-alanyl-tRNA(Ala) + AMP + diphosphate. Functionally, catalyzes the attachment of alanine to tRNA(Ala) in a two-step reaction: alanine is first activated by ATP to form Ala-AMP and then transferred to the acceptor end of tRNA(Ala). Also edits incorrectly charged Ser-tRNA(Ala) and Gly-tRNA(Ala) via its editing domain. This is Alanine--tRNA ligase from Actinobacillus pleuropneumoniae serotype 7 (strain AP76).